Here is a 324-residue protein sequence, read N- to C-terminus: MGAMIVKEVYETAEKIKSMEIRGAGRIARAAAQALMIQAEKSKAKEPEELWNELKVASKILYNTRPTAVSLPNALRYVMHRVKAAYLGGADLETLRFTAINSAKEFIYNSEKAIERIGEIGAKRIEDGDIIMTHCHSKAAISVMKKAFEQGKNIKVIVTETRPKWQGKITAKELASYGIPVIYIVDSAARHYMKMTDKVVMGADSITANGAVINKIGTSLIALTAKEHRVWVMIAAETYKFHPATMLGQLVEIEMRDPTEVIPEEELRTWPKNIEVWNPAFDVTPPEYIDVIITERGIIPPYAAIDILKEEFGWALKYKEPWED.

Substrate is bound by residues 22-25 (RGAG) and Arg65. Cys135 (proton acceptor) is an active-site residue. 137-139 (SKA) lines the substrate pocket. Catalysis depends on Asp204, which acts as the Proton donor. Residues 214–215 (NK) and Lys240 each bind substrate.

Belongs to the eIF-2B alpha/beta/delta subunits family. R15P isomerase subfamily.

It carries out the reaction alpha-D-ribose 1,5-bisphosphate = D-ribulose 1,5-bisphosphate. Catalyzes the isomerization of ribose 1,5-bisphosphate (R15P) to ribulose 1,5-bisphosphate (RuBP), the CO(2) acceptor and substrate for RubisCO. Functions in an archaeal AMP degradation pathway, together with AMP phosphorylase and RubisCO. The chain is Ribose 1,5-bisphosphate isomerase from Pyrococcus horikoshii (strain ATCC 700860 / DSM 12428 / JCM 9974 / NBRC 100139 / OT-3).